Consider the following 88-residue polypeptide: Augerpeptide Hhe9a (88 aa).

The signal sequence occupies residues 1-21 (MMTKTGLVLLFAFLLVFPVSS). A propeptide spanning residues 22–49 (LPMDAEAGHARLEMDKRDAGNEAWTRLL) is cleaved from the precursor. Intrachain disulfides connect Cys56/Cys71, Cys61/Cys73, and Cys67/Cys86.

Expressed by the venom duct.

The protein resides in the secreted. The chain is Augerpeptide Hhe9a from Hastula hectica (Sea snail).